Reading from the N-terminus, the 378-residue chain is Tetraacyldisaccharide 4'-kinase (378 aa).

63–70 (AVGGAGKT) lines the ATP pocket.

The protein belongs to the LpxK family.

It carries out the reaction a lipid A disaccharide + ATP = a lipid IVA + ADP + H(+). The protein operates within glycolipid biosynthesis; lipid IV(A) biosynthesis; lipid IV(A) from (3R)-3-hydroxytetradecanoyl-[acyl-carrier-protein] and UDP-N-acetyl-alpha-D-glucosamine: step 6/6. Transfers the gamma-phosphate of ATP to the 4'-position of a tetraacyldisaccharide 1-phosphate intermediate (termed DS-1-P) to form tetraacyldisaccharide 1,4'-bis-phosphate (lipid IVA). This Anaeromyxobacter sp. (strain K) protein is Tetraacyldisaccharide 4'-kinase.